Reading from the N-terminus, the 227-residue chain is Thymidylate kinase (227 aa).

G7–T14 lines the ATP pocket.

It belongs to the thymidylate kinase family.

The enzyme catalyses dTMP + ATP = dTDP + ADP. Functionally, phosphorylation of dTMP to form dTDP in both de novo and salvage pathways of dTTP synthesis. The polypeptide is Thymidylate kinase (Desulforapulum autotrophicum (strain ATCC 43914 / DSM 3382 / VKM B-1955 / HRM2) (Desulfobacterium autotrophicum)).